A 434-amino-acid chain; its full sequence is Autophagy-related protein 18 (434 aa).

WD repeat units lie at residues 1 to 34, 183 to 223, and 228 to 267; these read MNYV…KIFT, AHRA…KLYQ, and TYPS…TGLP. The short motif at 224–228 is the L/FRRG motif element; it reads FRRGT. The tract at residues 262–318 is disordered; it reads PVTGLPESPQSPGDKDKWRRSRSFDSENGSPPAGISPGSEMADVPAEKSKSSGTFGS. Over residues 274-286 the composition is skewed to basic and acidic residues; sequence GDKDKWRRSRSFD. The WD 4 repeat unit spans residues 367–407; the sequence is PRSGPVKSVVAMSSSSPQVMVVTSDGGFYIYSIDMETGGEG.

The protein belongs to the WD repeat PROPPIN family. As to quaternary structure, component of the PI(3,5)P2 regulatory complex.

It localises to the preautophagosomal structure membrane. It is found in the vacuole membrane. The protein localises to the endosome membrane. In terms of biological role, the PI(3,5)P2 regulatory complex regulates both the synthesis and turnover of phosphatidylinositol 3,5-bisphosphate (PtdIns(3,5)P2). Necessary for proper vacuole morphology. Plays an important role in osmotically-induced vacuole fragmentation. Required for cytoplasm to vacuole transport (Cvt) vesicle formation, pexophagy and starvation-induced autophagy. Involved in correct atg9 trafficking to the pre-autophagosomal structure. Might also be involved in premeiotic DNA replication. This is Autophagy-related protein 18 (atg18) from Botryotinia fuckeliana (strain B05.10) (Noble rot fungus).